Reading from the N-terminus, the 429-residue chain is Histidine--tRNA ligase (429 aa).

Belongs to the class-II aminoacyl-tRNA synthetase family. In terms of assembly, homodimer.

The protein resides in the cytoplasm. It catalyses the reaction tRNA(His) + L-histidine + ATP = L-histidyl-tRNA(His) + AMP + diphosphate + H(+). The sequence is that of Histidine--tRNA ligase from Escherichia fergusonii (strain ATCC 35469 / DSM 13698 / CCUG 18766 / IAM 14443 / JCM 21226 / LMG 7866 / NBRC 102419 / NCTC 12128 / CDC 0568-73).